The chain runs to 176 residues: Shikimate kinase (176 aa).

An ATP-binding site is contributed by 14-19 (GAGKSS). Serine 18 provides a ligand contact to Mg(2+). Substrate-binding residues include aspartate 36, arginine 60, and glycine 82. Arginine 120 provides a ligand contact to ATP. Arginine 138 lines the substrate pocket.

Belongs to the shikimate kinase family. In terms of assembly, monomer. Requires Mg(2+) as cofactor.

Its subcellular location is the cytoplasm. It catalyses the reaction shikimate + ATP = 3-phosphoshikimate + ADP + H(+). Its pathway is metabolic intermediate biosynthesis; chorismate biosynthesis; chorismate from D-erythrose 4-phosphate and phosphoenolpyruvate: step 5/7. In terms of biological role, catalyzes the specific phosphorylation of the 3-hydroxyl group of shikimic acid using ATP as a cosubstrate. This chain is Shikimate kinase, found in Dehalococcoides mccartyi (strain ATCC BAA-2266 / KCTC 15142 / 195) (Dehalococcoides ethenogenes (strain 195)).